Consider the following 420-residue polypeptide: Tyrosine--tRNA ligase (420 aa).

Tyr-33 contributes to the L-tyrosine binding site. The 'HIGH' region signature appears at Pro-38–His-47. L-tyrosine contacts are provided by Tyr-167 and Gln-171. A 'KMSKS' region motif is present at residues Lys-227 to Thr-231. Position 230 (Lys-230) interacts with ATP. In terms of domain architecture, S4 RNA-binding spans Leu-353 to Val-419.

Belongs to the class-I aminoacyl-tRNA synthetase family. TyrS type 1 subfamily. In terms of assembly, homodimer.

It is found in the cytoplasm. The catalysed reaction is tRNA(Tyr) + L-tyrosine + ATP = L-tyrosyl-tRNA(Tyr) + AMP + diphosphate + H(+). In terms of biological role, catalyzes the attachment of tyrosine to tRNA(Tyr) in a two-step reaction: tyrosine is first activated by ATP to form Tyr-AMP and then transferred to the acceptor end of tRNA(Tyr). The polypeptide is Tyrosine--tRNA ligase (Anaeromyxobacter dehalogenans (strain 2CP-1 / ATCC BAA-258)).